The primary structure comprises 773 residues: Mitochondrial inner membrane m-AAA protease component yta12 (773 aa).

The disordered stretch occupies residues 83–119; the sequence is FSVTSKRSQNGSSGSNSDANGRKNGQKNDDSKKKGLN. Residues 87-101 are compositionally biased toward low complexity; the sequence is SKRSQNGSSGSNSDA. Transmembrane regions (helical) follow at residues 126 to 146 and 239 to 259; these read VFEI…AYIL and VLAT…VIYL. ATP is bound by residues Val-298, Ala-299, Thr-340, Gly-341, Lys-342, Thr-343, Leu-344, and His-479. Residue His-561 participates in Zn(2+) binding. Glu-562 is an active-site residue. Zn(2+) is bound by residues His-565 and Asp-638. The interval 752 to 773 is disordered; sequence EYKNDHDPRNPPIPPSPQQPSA. Residues 761-773 are compositionally biased toward pro residues; that stretch reads NPPIPPSPQQPSA.

The protein in the N-terminal section; belongs to the AAA ATPase family. It in the C-terminal section; belongs to the peptidase M41 family. In terms of assembly, component of the m-AAA protease complex. The cofactor is Zn(2+).

It localises to the mitochondrion membrane. The catalysed reaction is ATP + H2O = ADP + phosphate + H(+). Catalytic component of the m-AAA protease, a protease that plays a key role in proteostasis of inner mitochondrial membrane proteins. Possesses both ATPase and protease activities: the ATPase activity is required to unfold substrates, threading them into the internal proteolytic cavity for hydrolysis into small peptide fragments. The complex is necessary for the assembly of mitochondrial respiratory chain and ATPase complexes. The m-AAA protease carries out protein quality control in the inner membrane of the mitochondria by mediating degradation of mistranslated or misfolded polypeptides. It also mediates protein maturation of the mitochondrial ribosomal subunit mrpl32/bL32m by catalyzing the cleavage of the presequence of mrpl32/bL32m prior to assembly into the mitochondrial ribosome. Also acts as a membrane protein dislocase: required to dislocate moderately hydrophobic transmembrane segments from the membrane. The protein is Mitochondrial inner membrane m-AAA protease component yta12 (yta12) of Schizosaccharomyces pombe (strain 972 / ATCC 24843) (Fission yeast).